Reading from the N-terminus, the 347-residue chain is Phosphoribosylformylglycinamidine cyclo-ligase (347 aa).

It belongs to the AIR synthase family.

It is found in the cytoplasm. The enzyme catalyses 2-formamido-N(1)-(5-O-phospho-beta-D-ribosyl)acetamidine + ATP = 5-amino-1-(5-phospho-beta-D-ribosyl)imidazole + ADP + phosphate + H(+). It functions in the pathway purine metabolism; IMP biosynthesis via de novo pathway; 5-amino-1-(5-phospho-D-ribosyl)imidazole from N(2)-formyl-N(1)-(5-phospho-D-ribosyl)glycinamide: step 2/2. The sequence is that of Phosphoribosylformylglycinamidine cyclo-ligase from Yersinia pestis.